A 284-amino-acid polypeptide reads, in one-letter code: Bifunctional protein FolD (284 aa).

Residues 165–167, threonine 192, and valine 233 contribute to the NADP(+) site; that span reads GRG.

It belongs to the tetrahydrofolate dehydrogenase/cyclohydrolase family. As to quaternary structure, homodimer.

The enzyme catalyses (6R)-5,10-methylene-5,6,7,8-tetrahydrofolate + NADP(+) = (6R)-5,10-methenyltetrahydrofolate + NADPH. The catalysed reaction is (6R)-5,10-methenyltetrahydrofolate + H2O = (6R)-10-formyltetrahydrofolate + H(+). The protein operates within one-carbon metabolism; tetrahydrofolate interconversion. Its function is as follows. Catalyzes the oxidation of 5,10-methylenetetrahydrofolate to 5,10-methenyltetrahydrofolate and then the hydrolysis of 5,10-methenyltetrahydrofolate to 10-formyltetrahydrofolate. The polypeptide is Bifunctional protein FolD (Corynebacterium glutamicum (strain R)).